Reading from the N-terminus, the 642-residue chain is DNA gyrase subunit B (642 aa).

A Toprim domain is found at 422-536 (CELFIVEGDS…AGYVYIAQPP (115 aa)). Glu-428, Asp-501, and Asp-503 together coordinate Mg(2+).

This sequence belongs to the type II topoisomerase family. Heterotetramer, composed of two GyrA and two GyrB chains. Within the heterotetramer, GyrA contains the active site tyrosine that forms a covalent intermediate with the DNA, while GyrB contributes the cofactor binding sites and catalyzes ATP hydrolysis. The cofactor is Mg(2+). It depends on Mn(2+) as a cofactor. Ca(2+) serves as cofactor.

The protein localises to the cytoplasm. It catalyses the reaction ATP-dependent breakage, passage and rejoining of double-stranded DNA.. Pyrrolopyrimidines inhibit both GyrB and its paralog in topoisomerase IV (parE). Its function is as follows. DNA gyrase negatively supercoils closed circular double-stranded DNA in an ATP-dependent manner and also catalyzes the interconversion of other topological isomers of double-stranded DNA rings, including catenanes and knotted rings. The chain is DNA gyrase subunit B from Enterococcus faecalis (strain ATCC 700802 / V583).